The primary structure comprises 356 residues: Probable methyltransferase-like protein 15 homolog (356 aa).

S-adenosyl-L-methionine contacts are provided by residues 55–57, Asp74, Phe103, Asp126, and Gln133; that span reads GGH.

This sequence belongs to the methyltransferase superfamily. RsmH family.

Probable S-adenosyl-L-methionine-dependent methyltransferase. This chain is Probable methyltransferase-like protein 15 homolog, found in Drosophila melanogaster (Fruit fly).